The following is a 408-amino-acid chain: LL-diaminopimelate aminotransferase (408 aa).

Tyr15 and Gly42 together coordinate substrate. Residues Tyr72, Ser108–Lys109, Tyr132, Asn187, Tyr218, and Ser246–Ser248 contribute to the pyridoxal 5'-phosphate site. Substrate-binding residues include Lys109, Tyr132, and Asn187. Lys249 carries the N6-(pyridoxal phosphate)lysine modification. Residues Arg257 and Asn292 each contribute to the pyridoxal 5'-phosphate site. Positions 292 and 388 each coordinate substrate.

This sequence belongs to the class-I pyridoxal-phosphate-dependent aminotransferase family. LL-diaminopimelate aminotransferase subfamily. In terms of assembly, homodimer. It depends on pyridoxal 5'-phosphate as a cofactor.

It catalyses the reaction (2S,6S)-2,6-diaminopimelate + 2-oxoglutarate = (S)-2,3,4,5-tetrahydrodipicolinate + L-glutamate + H2O + H(+). Its pathway is amino-acid biosynthesis; L-lysine biosynthesis via DAP pathway; LL-2,6-diaminopimelate from (S)-tetrahydrodipicolinate (aminotransferase route): step 1/1. Functionally, involved in the synthesis of meso-diaminopimelate (m-DAP or DL-DAP), required for both lysine and peptidoglycan biosynthesis. Catalyzes the direct conversion of tetrahydrodipicolinate to LL-diaminopimelate. The sequence is that of LL-diaminopimelate aminotransferase from Parasynechococcus marenigrum (strain WH8102).